Reading from the N-terminus, the 416-residue chain is Gamma-glutamyl phosphate reductase (416 aa).

Belongs to the gamma-glutamyl phosphate reductase family.

It is found in the cytoplasm. The catalysed reaction is L-glutamate 5-semialdehyde + phosphate + NADP(+) = L-glutamyl 5-phosphate + NADPH + H(+). It participates in amino-acid biosynthesis; L-proline biosynthesis; L-glutamate 5-semialdehyde from L-glutamate: step 2/2. Catalyzes the NADPH-dependent reduction of L-glutamate 5-phosphate into L-glutamate 5-semialdehyde and phosphate. The product spontaneously undergoes cyclization to form 1-pyrroline-5-carboxylate. This chain is Gamma-glutamyl phosphate reductase, found in Leptospira interrogans serogroup Icterohaemorrhagiae serovar copenhageni (strain Fiocruz L1-130).